Here is a 196-residue protein sequence, read N- to C-terminus: MSYYAFEGLIPVVHPTAFVHPSAVLIGDVIVGAGVYIGPLASLRGDYGRLIVQAGANIQDGCIMHGYCDTDTIVGENGHIGHGAILHGCVIGRDALVGMNSVIMDGAVIGEESIVAAMSFVKAGFHGEKRQLLMGTPARAVRSVSDDELHWKRLNTKEYQDLVGRCHASLHETQPLRQMEENRPRLQGTTDVTPKR.

A disordered region spans residues 173–196 (TQPLRQMEENRPRLQGTTDVTPKR). Residues 187 to 196 (QGTTDVTPKR) show a composition bias toward polar residues.

This sequence belongs to the transferase hexapeptide repeat family.

It participates in amine and polyamine metabolism; carnitine metabolism. Overproduction of CaiE stimulates the activity of CaiB and CaiD. This chain is Carnitine operon protein CaiE, found in Escherichia coli O139:H28 (strain E24377A / ETEC).